We begin with the raw amino-acid sequence, 96 residues long: Envelope glycoprotein N (96 aa).

The signal sequence occupies residues 1-21 (MPRSPLIVAVVAAALFAIVRG). The Virion surface segment spans residues 22–54 (RDPLLDAMRREGAMDFWSAGCYARGVPLSEPPQ). Residues 55 to 75 (ALVVFYVALTAVMVAVALYAY) traverse the membrane as a helical segment. At 76–96 (GLCFRLMGASGPNKKESRGRG) the chain is on the intravirion side.

This sequence belongs to the herpesviridae glycoprotein N family. As to quaternary structure, interacts (via N-terminus) with gM (via N-terminus). The gM-gN heterodimer forms the gCII complex.

Its subcellular location is the virion membrane. The protein localises to the host membrane. It localises to the host Golgi apparatus. The protein resides in the host trans-Golgi network. In terms of biological role, envelope glycoprotein necessary for proper maturation of gM and modulation of its membrane fusion activity. Also plays a critical role in virion morphogenesis. In Bos taurus (Bovine), this protein is Envelope glycoprotein N.